Consider the following 279-residue polypeptide: Shikimate dehydrogenase (NADP(+)) (279 aa).

Residues 14–16 and T62 each bind shikimate; that span reads SLS. The active-site Proton acceptor is K66. N87 and D103 together coordinate shikimate. NADP(+) is bound by residues 127-131, 151-156, and M215; these read GAGGA and NRTKAK. Position 217 (Y217) interacts with shikimate. An NADP(+)-binding site is contributed by G239.

This sequence belongs to the shikimate dehydrogenase family. In terms of assembly, homodimer.

It catalyses the reaction shikimate + NADP(+) = 3-dehydroshikimate + NADPH + H(+). It functions in the pathway metabolic intermediate biosynthesis; chorismate biosynthesis; chorismate from D-erythrose 4-phosphate and phosphoenolpyruvate: step 4/7. In terms of biological role, involved in the biosynthesis of the chorismate, which leads to the biosynthesis of aromatic amino acids. Catalyzes the reversible NADPH linked reduction of 3-dehydroshikimate (DHSA) to yield shikimate (SA). This is Shikimate dehydrogenase (NADP(+)) from Alteromonas mediterranea (strain DSM 17117 / CIP 110805 / LMG 28347 / Deep ecotype).